The primary structure comprises 348 residues: D-alanine--D-alanine ligase (348 aa).

An ATP-grasp domain is found at 132–334 (KRVLESIGIP…YPDLIEELVT (203 aa)). 162–217 (LARLTFPIFVKPANMGSSVGISKAQTKVELRKAIQLALTYDSRVLIEQGVVAREIE) serves as a coordination point for ATP. Positions 288, 301, and 303 each coordinate Mg(2+).

Belongs to the D-alanine--D-alanine ligase family. Mg(2+) serves as cofactor. Mn(2+) is required as a cofactor.

It localises to the cytoplasm. The enzyme catalyses 2 D-alanine + ATP = D-alanyl-D-alanine + ADP + phosphate + H(+). It participates in cell wall biogenesis; peptidoglycan biosynthesis. In terms of biological role, cell wall formation. This Streptococcus pyogenes serotype M12 (strain MGAS2096) protein is D-alanine--D-alanine ligase.